The chain runs to 453 residues: Bifunctional protein GlmU (453 aa).

Residues 1–226 (MKFSTVILAA…SIEVEGVNDR (226 aa)) are pyrophosphorylase. UDP-N-acetyl-alpha-D-glucosamine is bound by residues 8–11 (LAAG), Lys22, Gln73, 78–79 (GT), 100–102 (YGD), Gly137, Glu151, Asn166, and Asn224. A Mg(2+)-binding site is contributed by Asp102. Residue Asn224 participates in Mg(2+) binding. Residues 227–247 (IQLARLERAFQARQAKKLLEQ) are linker. Positions 248-453 (GVMLRDPARF…AGWQRPAKKK (206 aa)) are N-acetyltransferase. UDP-N-acetyl-alpha-D-glucosamine contacts are provided by Arg330 and Lys348. The Proton acceptor role is filled by His360. The UDP-N-acetyl-alpha-D-glucosamine site is built by Tyr363 and Asn374. Acetyl-CoA contacts are provided by residues Ala377, 383–384 (NY), Ser402, Ala420, and Arg437.

The protein in the N-terminal section; belongs to the N-acetylglucosamine-1-phosphate uridyltransferase family. This sequence in the C-terminal section; belongs to the transferase hexapeptide repeat family. Homotrimer. The cofactor is Mg(2+).

The protein localises to the cytoplasm. The catalysed reaction is alpha-D-glucosamine 1-phosphate + acetyl-CoA = N-acetyl-alpha-D-glucosamine 1-phosphate + CoA + H(+). The enzyme catalyses N-acetyl-alpha-D-glucosamine 1-phosphate + UTP + H(+) = UDP-N-acetyl-alpha-D-glucosamine + diphosphate. The protein operates within nucleotide-sugar biosynthesis; UDP-N-acetyl-alpha-D-glucosamine biosynthesis; N-acetyl-alpha-D-glucosamine 1-phosphate from alpha-D-glucosamine 6-phosphate (route II): step 2/2. Its pathway is nucleotide-sugar biosynthesis; UDP-N-acetyl-alpha-D-glucosamine biosynthesis; UDP-N-acetyl-alpha-D-glucosamine from N-acetyl-alpha-D-glucosamine 1-phosphate: step 1/1. It participates in bacterial outer membrane biogenesis; LPS lipid A biosynthesis. Functionally, catalyzes the last two sequential reactions in the de novo biosynthetic pathway for UDP-N-acetylglucosamine (UDP-GlcNAc). The C-terminal domain catalyzes the transfer of acetyl group from acetyl coenzyme A to glucosamine-1-phosphate (GlcN-1-P) to produce N-acetylglucosamine-1-phosphate (GlcNAc-1-P), which is converted into UDP-GlcNAc by the transfer of uridine 5-monophosphate (from uridine 5-triphosphate), a reaction catalyzed by the N-terminal domain. The chain is Bifunctional protein GlmU from Vibrio cholerae serotype O1 (strain M66-2).